We begin with the raw amino-acid sequence, 536 residues long: Formate--tetrahydrofolate ligase (536 aa).

ATP is bound at residue 51-58 (TAAGEGKT).

It belongs to the formate--tetrahydrofolate ligase family.

It catalyses the reaction (6S)-5,6,7,8-tetrahydrofolate + formate + ATP = (6R)-10-formyltetrahydrofolate + ADP + phosphate. It functions in the pathway one-carbon metabolism; tetrahydrofolate interconversion. The chain is Formate--tetrahydrofolate ligase from Thermoplasma volcanium (strain ATCC 51530 / DSM 4299 / JCM 9571 / NBRC 15438 / GSS1).